Consider the following 627-residue polypeptide: MKGLRSKFVKALSLKDEQGSHKNGHSKSHYISKNGSYVETDDVKHTDTHHSSKHELKKLKSHFLKDTLKHKRNHHANSNNEKHENSDKKIHTTVLASGHEDSDYSTFLPVIETSKVKDANHFPPNYPEPKNDSVSSNIDEFPNDSISSASFLSVPQSTPPYLVSQPTPLNKFLAGAENVDIPHSLRPVPRREHSSQFQVSEKRTLVRLPSFDDVHTSEREELFIKKLEQCNIIFDFNDPSSDLASKEIKREALLQMIDYVSENRGISSASLFPYVVNTFSLNVFRPISPALNDYSSDMFALDDEPFLEPAWPHLEEVYLLFIKFLESPDFRASKAKSLVDRRFFNRLLALFDTEDPRERELLKTTLHRIYGKFLNLRSYIRKSMNNVFLQFIYEREKFHGIAELLEILGSIINGFAVPLKEEHKIFLSKVLIPLHQTKSVFLYHPQLTYCIVQFIDKDPSLTKAVLTGILKYWPRINSFKELLFLNEIEDIFEVLEPSEFVNIMSPLFQQLARSISSMHFQVAERALCLWSNEYFTSLVSQNVVTLLPIIYPSLYKTANEHWNSTIQAIACNVLQIFVDMDADFFNGLVEDYKQAIIKQEEVMIIRKQQWCQIEALAAENKPTDYLR.

Residues 1 to 37 (MKGLRSKFVKALSLKDEQGSHKNGHSKSHYISKNGSY) are disordered.

The protein belongs to the phosphatase 2A regulatory subunit B family. In terms of assembly, PP2A consists of a common heterodimeric core enzyme, composed of a 36 kDa catalytic subunit (subunit C) and a 65 kDa constant regulatory subunit (PR65 or subunit A), that associates with a variety of regulatory subunits. Proteins that associate with the core dimer include three families of regulatory subunits B (the R2/B/PR55/B55, R3/B''/PR72/PR130/PR59 and R5/B'/B56 families), the 48 kDa variable regulatory subunit, viral proteins, and cell signaling molecules.

It localises to the cytoplasm. It is found in the cell tip. Its function is as follows. The B regulatory subunit might modulate substrate selectivity and catalytic activity, and might also direct the localization of the catalytic enzyme to a particular subcellular compartment. Has a role in cell shape control and septum formation. This is Serine/threonine-protein phosphatase 2A 56 kDa regulatory subunit delta 2 isoform (par2) from Schizosaccharomyces pombe (strain 972 / ATCC 24843) (Fission yeast).